The following is a 372-amino-acid chain: MWPFASVPAGAKCRLVETLPENMDFRSDHLTTFECFNEIITLAKKYIYIASFCCNPLSTTRGALIFDKLKEASEKGIKIIVLLDERGKRNLGELQSHCPDINFITVNIDKKNNVGLLLGCFWVSDDERCYVGNASFTGGSIHTIKTLGVYSDYPPLATDLRRRFDTFKAFNSAKNSWLNLCSAACCLPVSTAYHIKNPIGGVFFTDSPEHLLGYSRDLDTDVVIDKLKSAKTSIDIEHLAIVPTTRVDGNSYYWPDIYNSIIEAAINRGVKIRLLVGNWDKNDVYSMATARSLDALCVQNDLSVKVFTIQNNTKLLIVDDEYVHITSANFDGTHYQNHGFVSFNSIDKQLVSEAKKIFERDWVSSHSKSLKI.

Residues 153–156 (YPPL) carry the YPPL motif. S-palmitoyl cysteine; by host attachment occurs at residues C185 and C186. The PLD phosphodiesterase domain maps to 307–334 (FTIQNNTKLLIVDDEYVHITSANFDGTH).

This sequence belongs to the orthopoxvirus OPG057 family. Interacts with protein OPG190/B5. Palmitoylated. Attachment of the palmitate moiety is essential for correct intracellular targeting and protein function.

The protein resides in the virion membrane. It localises to the host Golgi apparatus. It is found in the host trans-Golgi network. The protein localises to the host endoplasmic reticulum membrane. It carries out the reaction a 1,2-diacyl-sn-glycero-3-phosphocholine + H2O = a 1,2-diacyl-sn-glycero-3-phosphate + choline + H(+). Functionally, major envelope protein that plays a role in the biogenesis of the viral double membrane and in egress of virus from the host cell. Produces the wrapped form of virus that is required for cell-to-cell spread. Acts as a lipase with broad specificity including phospholipase C, phospholipase A, and triacylglycerol lipase activities. This Vaccinia virus (strain Western Reserve) (VACV) protein is Envelope phospholipase OPG057 (OPG057).